The primary structure comprises 339 residues: HPr kinase/phosphorylase (339 aa).

Active-site residues include H153 and K174. 168-175 is an ATP binding site; sequence GKSGLGKS. S175 contacts Mg(2+). D192 (proton acceptor; for phosphorylation activity. Proton donor; for dephosphorylation activity) is an active-site residue. Positions 216-225 are important for the catalytic mechanism of both phosphorylation and dephosphorylation; sequence MEIRGLGVVD. E217 contributes to the Mg(2+) binding site. R258 is a catalytic residue. The tract at residues 279 to 284 is important for the catalytic mechanism of dephosphorylation; that stretch reads PINPGK.

Belongs to the HPrK/P family. In terms of assembly, homohexamer. It depends on Mg(2+) as a cofactor.

It carries out the reaction [HPr protein]-L-serine + ATP = [HPr protein]-O-phospho-L-serine + ADP + H(+). It catalyses the reaction [HPr protein]-O-phospho-L-serine + phosphate + H(+) = [HPr protein]-L-serine + diphosphate. Its function is as follows. Catalyzes the ATP- as well as the pyrophosphate-dependent phosphorylation of a specific serine residue in HPr, a phosphocarrier protein of the phosphoenolpyruvate-dependent sugar phosphotransferase system (PTS). HprK/P also catalyzes the pyrophosphate-producing, inorganic phosphate-dependent dephosphorylation (phosphorolysis) of seryl-phosphorylated HPr (P-Ser-HPr). This chain is HPr kinase/phosphorylase, found in Chlorobium phaeobacteroides (strain BS1).